The primary structure comprises 153 residues: Subtilisin propeptide-like protein (153 aa).

The first 27 residues, 1–27 (MKFLFAFNFFSLYIYLYEFLCIHLCGS), serve as a signal peptide directing secretion. Positions 127 to 153 (QISHLSEFIQYLLNKNVCIEFNQNVML) are dispensable for parasite growth in host erythrocytes.

It localises to the secreted. It is found in the parasitophorous vacuole lumen. Its subcellular location is the cell membrane. Acts as a specific inhibitor of subtilisin-like protease SUB1. The sequence is that of Subtilisin propeptide-like protein from Plasmodium falciparum (isolate 3D7).